Here is a 622-residue protein sequence, read N- to C-terminus: Probable potassium transport system protein Kup (622 aa).

Helical transmembrane passes span 8-28 (LAALTLGAIGVVYGDIGTSVL), 50-70 (VLSILFWTLTTIVSLKYVVLV), 103-123 (LGIGVFGTSLFYGDGVITPAI), 137-157 (PHFGKAVIPLTLIVLFCLFAV), 169-189 (FGPVTLVWFTSIAALGVPHIV), 215-235 (FIILGAVVLCVTGAEALYADL), 247-267 (WFSVAMPALTINYFGQGALLL), 285-305 (ALIPLVIMATMATVIASQALI), 337-357 (IYIPFVNWALFLAIVLAVVMF), 366-386 (AYGIAVTLDMLITTVLTFFVI), 393-413 (PLALCIAATGFFFLVDLAFFG), and 419-439 (LLQGGWFPLMIGSIVFMLMMT).

The protein belongs to the HAK/KUP transporter (TC 2.A.72) family.

It is found in the cell inner membrane. It catalyses the reaction K(+)(in) + H(+)(in) = K(+)(out) + H(+)(out). In terms of biological role, transport of potassium into the cell. Likely operates as a K(+):H(+) symporter. This chain is Probable potassium transport system protein Kup, found in Paracidovorax citrulli (strain AAC00-1) (Acidovorax citrulli).